The primary structure comprises 396 residues: ATP-dependent RNA helicase eIF4A (396 aa).

The Q motif signature appears at aspartate 23 to glutamine 51. Positions isoleucine 54–isoleucine 224 constitute a Helicase ATP-binding domain. Alanine 67–threonine 74 contributes to the ATP binding site. A DEAD box motif is present at residues aspartate 172–aspartate 175. The Helicase C-terminal domain occupies glycine 235–isoleucine 396.

This sequence belongs to the DEAD box helicase family. eIF4A subfamily. In terms of assembly, component of the eIF4F complex, which composition varies with external and internal environmental conditions. It is composed of at least eIF4A, eIF4E and eIF4G.

The protein localises to the cytoplasm. The catalysed reaction is ATP + H2O = ADP + phosphate + H(+). Its function is as follows. ATP-dependent RNA helicase which is a subunit of the eIF4F complex involved in cap recognition and is required for mRNA binding to ribosome. In the current model of translation initiation, eIF4A unwinds RNA secondary structures in the 5'-UTR of mRNAs which is necessary to allow efficient binding of the small ribosomal subunit, and subsequent scanning for the initiator codon. The polypeptide is ATP-dependent RNA helicase eIF4A (TIF1) (Pyricularia oryzae (strain 70-15 / ATCC MYA-4617 / FGSC 8958) (Rice blast fungus)).